Here is a 215-residue protein sequence, read N- to C-terminus: Cytochrome b6 (215 aa).

The chain crosses the membrane as a helical span at residues 32–52; the sequence is IFYCLGGITFTSFVIQVASGF. C35 serves as a coordination point for heme c. Residues H86 and H100 each contribute to the heme b site. The next 3 helical transmembrane spans lie at 90-110, 116-136, and 186-206; these read ASMM…TGGF, LTWV…VTGY, and LHTF…FLMI. Residues H187 and H202 each coordinate heme b.

This sequence belongs to the cytochrome b family. PetB subfamily. The 4 large subunits of the cytochrome b6-f complex are cytochrome b6, subunit IV (17 kDa polypeptide, PetD), cytochrome f and the Rieske protein, while the 4 small subunits are PetG, PetL, PetM and PetN. The complex functions as a dimer. Requires heme b as cofactor. Heme c is required as a cofactor.

The protein localises to the plastid. The protein resides in the chloroplast thylakoid membrane. Functionally, component of the cytochrome b6-f complex, which mediates electron transfer between photosystem II (PSII) and photosystem I (PSI), cyclic electron flow around PSI, and state transitions. This is Cytochrome b6 from Chaetosphaeridium globosum (Charophycean green alga).